A 173-amino-acid chain; its full sequence is Ribulose bisphosphate carboxylase small subunit, chloroplastic 7 (173 aa).

Residues 1 to 49 (MASIPATVATVAQANMVAPFTGLKSNAAFPVTKKVNDFSTLASNGGRVQ) constitute a chloroplast transit peptide.

It belongs to the RuBisCO small chain family. As to quaternary structure, heterohexadecamer of 8 large and 8 small subunits.

It is found in the plastid. It localises to the chloroplast. In terms of biological role, ruBisCO catalyzes two reactions: the carboxylation of D-ribulose 1,5-bisphosphate, the primary event in carbon dioxide fixation, as well as the oxidative fragmentation of the pentose substrate. Both reactions occur simultaneously and in competition at the same active site. Although the small subunit is not catalytic it is essential for maximal activity. This chain is Ribulose bisphosphate carboxylase small subunit, chloroplastic 7, found in Flaveria pringlei.